We begin with the raw amino-acid sequence, 500 residues long: Mucin-like protein 3 (500 aa).

Residues 1-27 (MAQPTSGLYSTFGFFICLLFFPASWEA) form the signal peptide. Residues 28–429 (GANTFQELQK…GENNSFPVWA (402 aa)) lie on the Extracellular side of the membrane. 2 disordered regions span residues 55-198 (THRA…SQKP) and 275-324 (EGKT…PTAS). Residues 58-71 (ASSDQKTSRQHPPD) show a composition bias toward basic and acidic residues. Positions 76–89 (TATQKAKNQCNTTR) are enriched in polar residues. N-linked (GlcNAc...) asparagine glycosylation is present at N108. 2 stretches are compositionally biased toward basic and acidic residues: residues 111–123 (VRHE…EKDL) and 132–142 (ARNERSADDPR). N148 carries an N-linked (GlcNAc...) asparagine glycan. Polar residues-rich tracts occupy residues 159 to 178 (PRRN…TTKS), 279 to 289 (SPASESSSQAQ), and 298 to 324 (TSAS…PTAS). Residues 430-450 (IVIVILMAVIILLVFIGLILL) traverse the membrane as a helical segment. The Cytoplasmic portion of the chain corresponds to 451–500 (VSCASRARHVLTQNSEEPEPQPEDKGSRNSYPVYLMEQQNLNLNQIPSPP).

The protein resides in the cell membrane. The protein localises to the cytoplasm. Its function is as follows. May modulate NF-kappaB signaling and play a role in cell growth. The polypeptide is Mucin-like protein 3 (Mus musculus (Mouse)).